Consider the following 210-residue polypeptide: dITP/XTP pyrophosphatase (210 aa).

Thr13–Lys18 contributes to the substrate binding site. Asp45 and Asp74 together coordinate Mg(2+). Asp74 acts as the Proton acceptor in catalysis. Substrate contacts are provided by residues Ser75, Phe160–Asp163, Lys183, and His195–Arg196.

It belongs to the HAM1 NTPase family. In terms of assembly, homodimer. It depends on Mg(2+) as a cofactor.

It carries out the reaction XTP + H2O = XMP + diphosphate + H(+). The catalysed reaction is dITP + H2O = dIMP + diphosphate + H(+). The enzyme catalyses ITP + H2O = IMP + diphosphate + H(+). Pyrophosphatase that catalyzes the hydrolysis of nucleoside triphosphates to their monophosphate derivatives, with a high preference for the non-canonical purine nucleotides XTP (xanthosine triphosphate), dITP (deoxyinosine triphosphate) and ITP. Seems to function as a house-cleaning enzyme that removes non-canonical purine nucleotides from the nucleotide pool, thus preventing their incorporation into DNA/RNA and avoiding chromosomal lesions. The chain is dITP/XTP pyrophosphatase from Rhodopseudomonas palustris (strain ATCC BAA-98 / CGA009).